The following is a 258-amino-acid chain: Thiazole synthase (258 aa).

Residue lysine 100 is the Schiff-base intermediate with DXP of the active site. Residues glycine 161, 187-188 (AG), and 209-210 (NT) each bind 1-deoxy-D-xylulose 5-phosphate.

The protein belongs to the ThiG family. Homotetramer. Forms heterodimers with either ThiH or ThiS.

It localises to the cytoplasm. It carries out the reaction [ThiS sulfur-carrier protein]-C-terminal-Gly-aminoethanethioate + 2-iminoacetate + 1-deoxy-D-xylulose 5-phosphate = [ThiS sulfur-carrier protein]-C-terminal Gly-Gly + 2-[(2R,5Z)-2-carboxy-4-methylthiazol-5(2H)-ylidene]ethyl phosphate + 2 H2O + H(+). The protein operates within cofactor biosynthesis; thiamine diphosphate biosynthesis. Catalyzes the rearrangement of 1-deoxy-D-xylulose 5-phosphate (DXP) to produce the thiazole phosphate moiety of thiamine. Sulfur is provided by the thiocarboxylate moiety of the carrier protein ThiS. In vitro, sulfur can be provided by H(2)S. The sequence is that of Thiazole synthase from Campylobacter jejuni (strain RM1221).